A 213-amino-acid polypeptide reads, in one-letter code: Uridine kinase (213 aa).

Position 15–22 (15–22 (GASASGKS)) interacts with ATP.

The protein belongs to the uridine kinase family.

Its subcellular location is the cytoplasm. It carries out the reaction uridine + ATP = UMP + ADP + H(+). The enzyme catalyses cytidine + ATP = CMP + ADP + H(+). The protein operates within pyrimidine metabolism; CTP biosynthesis via salvage pathway; CTP from cytidine: step 1/3. Its pathway is pyrimidine metabolism; UMP biosynthesis via salvage pathway; UMP from uridine: step 1/1. The sequence is that of Uridine kinase from Pectobacterium atrosepticum (strain SCRI 1043 / ATCC BAA-672) (Erwinia carotovora subsp. atroseptica).